The primary structure comprises 130 residues: Capsid protein (130 aa).

The tract at residues 31–104 is viral RNA-binding; the sequence is EWLSNNSRSQ…FAATDDVTVI (74 aa).

Belongs to the Leviviricetes capsid protein family. Homodimer. The capsid proteins form dimers that assemble by group of 5. Twelve such pentamers are linked together with free dimers. The homodimers binds to the viral RNA via an operator hairpin, but also to many other RNA sequences in the viral genome; this interaction probably shifts the virus from the replicative to the assembly phase and ensures specific encapsidation of the viral genome.

The protein resides in the virion. In terms of biological role, capsid protein self-assembles to form an icosahedral capsid with a T=3 symmetry, about 26 nm in diameter, and consisting of 89 capsid proteins dimers (178 capsid proteins). Involved in viral genome encapsidation through the interaction between a capsid protein dimer and the multiple packaging signals present in the RNA genome. The capsid also contains 1 copy of the A2 maturation protein. Its function is as follows. Acts as a translational repressor of viral replicase synthesis late in infection. This latter function is the result of capsid protein interaction with an RNA hairpin which contains the replicase ribosome-binding site. The sequence is that of Capsid protein from Escherichia coli (Bacteriophage GA).